Consider the following 345-residue polypeptide: MTEKTSLSYKDAGVDIDAGNALVDRIKGVVKKTRRPEVMGGLGGFGALCALPQKYREPVLVSGTDGVGTKLRLAMDLQRHDTIGIDLVAMCVNDLVVQGAEPLFFLDYYATGKLDVDTASSVISGIAEGCLQSGCALVGGETAEMPGMYHGEDYDVAGFCVGVVEKSEIIDGTKVTDGDVLIALGSSGPHSNGYSLVRKILEVSGCDPQTTQLAGKPLADHLLAPTRIYVKSVLELIDKVDVHAIAHLTGGGFWENIPRVLPENTQAVIDESSWQWPEVFNWLQTAGNVSRHEMYRTFNCGVGMIIALPEAEVENALALLNANGEKAWKIGVIKASDAEQRVVIA.

This sequence belongs to the AIR synthase family.

Its subcellular location is the cytoplasm. It catalyses the reaction 2-formamido-N(1)-(5-O-phospho-beta-D-ribosyl)acetamidine + ATP = 5-amino-1-(5-phospho-beta-D-ribosyl)imidazole + ADP + phosphate + H(+). The protein operates within purine metabolism; IMP biosynthesis via de novo pathway; 5-amino-1-(5-phospho-D-ribosyl)imidazole from N(2)-formyl-N(1)-(5-phospho-D-ribosyl)glycinamide: step 2/2. This chain is Phosphoribosylformylglycinamidine cyclo-ligase, found in Escherichia fergusonii (strain ATCC 35469 / DSM 13698 / CCUG 18766 / IAM 14443 / JCM 21226 / LMG 7866 / NBRC 102419 / NCTC 12128 / CDC 0568-73).